A 155-amino-acid chain; its full sequence is Medium/long-chain acyl-CoA thioesterase YigI (155 aa).

This sequence belongs to the YigI thioesterase family.

The protein localises to the cytoplasm. It catalyses the reaction a fatty acyl-CoA + H2O = a fatty acid + CoA + H(+). The catalysed reaction is a medium-chain fatty acyl-CoA + H2O = a medium-chain fatty acid + CoA + H(+). The enzyme catalyses a long-chain fatty acyl-CoA + H2O = a long-chain fatty acid + CoA + H(+). In terms of biological role, displays thioesterase activity against medium- to long-chain acyl-CoA substrates. Is involved in the thioesterase-dependent beta-oxidation pathway of (9Z,11E)-octadecadienoate (conjugated linoleic acid or CLA), along with TesB and FadM. In Shigella flexneri, this protein is Medium/long-chain acyl-CoA thioesterase YigI (yigI).